The chain runs to 307 residues: Ubiquitin recognition factor in ER-associated degradation protein 1 (307 aa).

Met-1 carries the post-translational modification N-acetylmethionine. Ser-129, Ser-231, Ser-245, Ser-247, and Ser-299 each carry phosphoserine. Disordered stretches follow at residues 230–255 (GSGN…GDIK) and 288–307 (GRFI…GRKP).

The protein belongs to the UFD1 family. In terms of assembly, heterodimer with NPLOC4, this heterodimer binds VCP and inhibits Golgi membrane fusion. Interacts with USP13. Interacts with ZFAND2B; probably through VCP.

The protein localises to the nucleus. It localises to the cytoplasm. The protein resides in the cytosol. The protein operates within protein degradation; proteasomal ubiquitin-dependent pathway. Its function is as follows. Essential component of the ubiquitin-dependent proteolytic pathway which degrades ubiquitin fusion proteins. The ternary complex containing UFD1, VCP and NPLOC4 binds ubiquitinated proteins and is necessary for the export of misfolded proteins from the ER to the cytoplasm, where they are degraded by the proteasome. The NPLOC4-UFD1-VCP complex regulates spindle disassembly at the end of mitosis and is necessary for the formation of a closed nuclear envelope. It may be involved in the development of some ectoderm-derived structures. Acts as a negative regulator of type I interferon production via the complex formed with VCP and NPLOC4, which binds to RIGI and recruits RNF125 to promote ubiquitination and degradation of RIGI. The chain is Ubiquitin recognition factor in ER-associated degradation protein 1 from Mus musculus (Mouse).